Here is a 270-residue protein sequence, read N- to C-terminus: Diaminopimelate epimerase (270 aa).

Substrate is bound by residues Asn-15, Gln-49, and Asn-66. Cys-75 serves as the catalytic Proton donor. Substrate-binding positions include 76–77 (GN), Asn-155, Asn-187, and 204–205 (ER). Cys-213 functions as the Proton acceptor in the catalytic mechanism. Residue 214 to 215 (GS) coordinates substrate.

It belongs to the diaminopimelate epimerase family. Homodimer.

It is found in the cytoplasm. The enzyme catalyses (2S,6S)-2,6-diaminopimelate = meso-2,6-diaminopimelate. It participates in amino-acid biosynthesis; L-lysine biosynthesis via DAP pathway; DL-2,6-diaminopimelate from LL-2,6-diaminopimelate: step 1/1. Its function is as follows. Catalyzes the stereoinversion of LL-2,6-diaminopimelate (L,L-DAP) to meso-diaminopimelate (meso-DAP), a precursor of L-lysine and an essential component of the bacterial peptidoglycan. This chain is Diaminopimelate epimerase, found in Rickettsia massiliae (strain Mtu5).